A 432-amino-acid polypeptide reads, in one-letter code: Amino-acid acetyltransferase (432 aa).

In terms of domain architecture, N-acetyltransferase spans 286–432; that stretch reads EVVREATIED…RNSKIFEKPL (147 aa).

It belongs to the acetyltransferase family. ArgA subfamily.

Its subcellular location is the cytoplasm. The catalysed reaction is L-glutamate + acetyl-CoA = N-acetyl-L-glutamate + CoA + H(+). It participates in amino-acid biosynthesis; L-arginine biosynthesis; N(2)-acetyl-L-ornithine from L-glutamate: step 1/4. In Pseudomonas putida (strain ATCC 47054 / DSM 6125 / CFBP 8728 / NCIMB 11950 / KT2440), this protein is Amino-acid acetyltransferase (argA).